The sequence spans 571 residues: MTDEKVNSDQNMNGKQGVNLISSLPTTQVPVSILTNKERRKSIHDESNFERSDSHEDQSKSNSNRRNIYKNDYSTNLRDFSFANLKQNSERNKDGHEIQINTSMPANTNGQQKRFSPSLPSAVSFTVPEVERLPYHRYSISNKPGKQQQQQEQLQQNQQQEEQQKAQLQEQNQRAKQQEEVKQIQEQVQKKQTERQQLIDEKERIANAIFKENTTNDGTDIRKHSVSSGTSNSEDEVDSPSMEKNSIVHMPGDFIYFNPKSNASKPITAKAAPLSANNSTHKNKEVITAPTGPRVPFTEFFQKEDDKKFHILIGATGSVATIKVPLIIDKLFKIYGPEKISIQLIVTKPAEHFLKGLKMSTHVKIWREEDAWVFDAVNKNDTSLSLNLILHHELRKWADIFLIAPLSANTLAKLANGICNNLLTSVMRDWSPLTPVLIAPAMNTFMYINPMTKKHLTSLVQDYPFIQVLKPVEKVLICGDIGMGGMREWTDIVEIVRRRINEIRKARDEETGDKEQEQEEQEGADNEDDDDEDDEEDEEDEEEEEALNETASDESNDEEDEEDEEDVKTEV.

2 disordered regions span residues 1–72 and 100–120; these read MTDE…YKND and INTSMPANTNGQQKRFSPSLP. Polar residues predominate over residues 8 to 35; it reads SDQNMNGKQGVNLISSLPTTQVPVSILT. Phosphoserine is present on serine 42. Positions 43 to 59 are enriched in basic and acidic residues; the sequence is IHDESNFERSDSHEDQS. Polar residues predominate over residues 60-72; sequence KSNSNRRNIYKND. Serine 116, serine 121, and serine 124 each carry phosphoserine. Disordered regions lie at residues 140-171 and 209-244; these read ISNKPGKQQQQQEQLQQNQQQEEQQKAQLQEQ and IFKENTTNDGTDIRKHSVSSGTSNSEDEVDSPSMEK. Residues 146-171 show a composition bias toward low complexity; sequence KQQQQQEQLQQNQQQEEQQKAQLQEQ. Residue serine 264 is modified to Phosphoserine. Residues 507 to 571 are disordered; it reads RDEETGDKEQ…EDEEDVKTEV (65 aa). Residues 516-571 show a composition bias toward acidic residues; it reads QEQEEQEGADNEDDDDEDDEEDEEDEEEEEALNETASDESNDEEDEEDEEDVKTEV.

This sequence belongs to the HFCD (homooligomeric flavin containing Cys decarboxylase) superfamily. Component of the phosphopantothenoylcysteine decarboxylase (PPCDC) complex, a heterotrimer composed of CAB3, HAL3 and VHS3.

It is found in the cytoplasm. In terms of biological role, component of the phosphopantothenoylcysteine decarboxylase (PPCDC) involved in the coenzyme A synthesis. The polypeptide is Coenzyme A biosynthesis protein 3 (CAB3) (Saccharomyces cerevisiae (strain ATCC 204508 / S288c) (Baker's yeast)).